The chain runs to 262 residues: Putative cysteine-rich repeat secretory protein 24 (262 aa).

The signal sequence occupies residues 1 to 29 (MSLSSSVTKHLISASILAIVAMQLPSVHS). Gnk2-homologous domains lie at 39 to 141 (YLHH…SIYT) and 147 to 259 (YKNN…LYPF).

Belongs to the cysteine-rich repeat secretory protein family.

It localises to the secreted. The polypeptide is Putative cysteine-rich repeat secretory protein 24 (CRRSP24) (Arabidopsis thaliana (Mouse-ear cress)).